Consider the following 426-residue polypeptide: Glutamate-1-semialdehyde 2,1-aminomutase (426 aa).

Lysine 265 bears the N6-(pyridoxal phosphate)lysine mark.

Belongs to the class-III pyridoxal-phosphate-dependent aminotransferase family. HemL subfamily. Homodimer. Requires pyridoxal 5'-phosphate as cofactor.

It is found in the cytoplasm. It carries out the reaction (S)-4-amino-5-oxopentanoate = 5-aminolevulinate. It functions in the pathway porphyrin-containing compound metabolism; protoporphyrin-IX biosynthesis; 5-aminolevulinate from L-glutamyl-tRNA(Glu): step 2/2. In Hydrogenovibrio crunogenus (strain DSM 25203 / XCL-2) (Thiomicrospira crunogena), this protein is Glutamate-1-semialdehyde 2,1-aminomutase.